The chain runs to 356 residues: 3-dehydroquinate synthase (356 aa).

Residues 71 to 76 (EGEASK), 105 to 109 (GVTGD), 129 to 130 (TS), K142, and K151 each bind NAD(+). Zn(2+) contacts are provided by E184, H247, and H264.

Belongs to the sugar phosphate cyclases superfamily. Dehydroquinate synthase family. Co(2+) serves as cofactor. Requires Zn(2+) as cofactor. NAD(+) is required as a cofactor.

The protein localises to the cytoplasm. The catalysed reaction is 7-phospho-2-dehydro-3-deoxy-D-arabino-heptonate = 3-dehydroquinate + phosphate. It functions in the pathway metabolic intermediate biosynthesis; chorismate biosynthesis; chorismate from D-erythrose 4-phosphate and phosphoenolpyruvate: step 2/7. Its function is as follows. Catalyzes the conversion of 3-deoxy-D-arabino-heptulosonate 7-phosphate (DAHP) to dehydroquinate (DHQ). The sequence is that of 3-dehydroquinate synthase from Lactococcus lactis subsp. cremoris (strain SK11).